A 326-amino-acid polypeptide reads, in one-letter code: Ribonuclease H2 subunit A (326 aa).

The segment at 1-47 (MKDDHDAWEPEELVSDNNSSENELQEDQNSSITFLPPSVNKSNPAKS) is disordered. Over residues 15–47 (SDNNSSENELQEDQNSSITFLPPSVNKSNPAKS) the composition is skewed to polar residues. In terms of domain architecture, RNase H type-2 spans 63–286 (PYRLGVDEAG…AKDLLELPSK (224 aa)). Positions 69, 70, and 180 each coordinate a divalent metal cation.

This sequence belongs to the RNase HII family. Eukaryotic subfamily. It depends on Mn(2+) as a cofactor. The cofactor is Mg(2+).

It catalyses the reaction Endonucleolytic cleavage to 5'-phosphomonoester.. Its function is as follows. Endonuclease that specifically degrades the RNA of RNA-DNA hybrids. Participates in DNA replication. The chain is Ribonuclease H2 subunit A (rnh201) from Schizosaccharomyces pombe (strain 972 / ATCC 24843) (Fission yeast).